Consider the following 131-residue polypeptide: UPF0102 protein YraN (131 aa).

Residues 1–19 (MATVPTRSGSPRQLTTKQT) are compositionally biased toward polar residues. A disordered region spans residues 1–21 (MATVPTRSGSPRQLTTKQTGD).

Belongs to the UPF0102 family.

This chain is UPF0102 protein YraN, found in Escherichia coli O127:H6 (strain E2348/69 / EPEC).